A 346-amino-acid polypeptide reads, in one-letter code: MIETDRLIAPTAKEREDQLDRAVRPKVLADYVGQPAVREQMEIFICAAKKRREALDHTLVFGPPGLGKTTLANIIANEMGVSLKSTSGPVLEKAGDLAAMLTNLEAGDVLFIDEIHRLSPVVEEILYPAMEDFQLDIMIGEGPAARSIKLDLPPFTLVGATTRAGLLTSPLRDRFGIVQRLEFYNVKDLTHIVARSAALLGVSMEELGAAEIAKRSRGTPRIANRLLRRVRDFAEVKGDGRITSELADKALNMLNVDERGFDHMDRRLLLAMINNFDGGPVGVESLAAAISEDRGTIEDVIEPYLIQQGFMARTPRGRVLTTNAYLHFGLSMPKRLQESQGGEGIA.

A large ATPase domain (RuvB-L) region spans residues 4 to 184; that stretch reads TDRLIAPTAK…FGIVQRLEFY (181 aa). ATP is bound by residues R24, G65, K68, T69, T70, 131–133, R174, Y184, and R221; that span reads EDF. T69 serves as a coordination point for Mg(2+). Residues 185–255 form a small ATPAse domain (RuvB-S) region; the sequence is NVKDLTHIVA…LADKALNMLN (71 aa). The segment at 258 to 346 is head domain (RuvB-H); it reads ERGFDHMDRR…QESQGGEGIA (89 aa). DNA-binding residues include R294, R313, and R318.

The protein belongs to the RuvB family. As to quaternary structure, homohexamer. Forms an RuvA(8)-RuvB(12)-Holliday junction (HJ) complex. HJ DNA is sandwiched between 2 RuvA tetramers; dsDNA enters through RuvA and exits via RuvB. An RuvB hexamer assembles on each DNA strand where it exits the tetramer. Each RuvB hexamer is contacted by two RuvA subunits (via domain III) on 2 adjacent RuvB subunits; this complex drives branch migration. In the full resolvosome a probable DNA-RuvA(4)-RuvB(12)-RuvC(2) complex forms which resolves the HJ.

Its subcellular location is the cytoplasm. The catalysed reaction is ATP + H2O = ADP + phosphate + H(+). Functionally, the RuvA-RuvB-RuvC complex processes Holliday junction (HJ) DNA during genetic recombination and DNA repair, while the RuvA-RuvB complex plays an important role in the rescue of blocked DNA replication forks via replication fork reversal (RFR). RuvA specifically binds to HJ cruciform DNA, conferring on it an open structure. The RuvB hexamer acts as an ATP-dependent pump, pulling dsDNA into and through the RuvAB complex. RuvB forms 2 homohexamers on either side of HJ DNA bound by 1 or 2 RuvA tetramers; 4 subunits per hexamer contact DNA at a time. Coordinated motions by a converter formed by DNA-disengaged RuvB subunits stimulates ATP hydrolysis and nucleotide exchange. Immobilization of the converter enables RuvB to convert the ATP-contained energy into a lever motion, pulling 2 nucleotides of DNA out of the RuvA tetramer per ATP hydrolyzed, thus driving DNA branch migration. The RuvB motors rotate together with the DNA substrate, which together with the progressing nucleotide cycle form the mechanistic basis for DNA recombination by continuous HJ branch migration. Branch migration allows RuvC to scan DNA until it finds its consensus sequence, where it cleaves and resolves cruciform DNA. The polypeptide is Holliday junction branch migration complex subunit RuvB (Cellvibrio japonicus (strain Ueda107) (Pseudomonas fluorescens subsp. cellulosa)).